Consider the following 886-residue polypeptide: Alanine--tRNA ligase (886 aa).

Zn(2+)-binding residues include histidine 568, histidine 572, cysteine 670, and histidine 674.

Belongs to the class-II aminoacyl-tRNA synthetase family. It depends on Zn(2+) as a cofactor.

It localises to the cytoplasm. The catalysed reaction is tRNA(Ala) + L-alanine + ATP = L-alanyl-tRNA(Ala) + AMP + diphosphate. Functionally, catalyzes the attachment of alanine to tRNA(Ala) in a two-step reaction: alanine is first activated by ATP to form Ala-AMP and then transferred to the acceptor end of tRNA(Ala). Also edits incorrectly charged Ser-tRNA(Ala) and Gly-tRNA(Ala) via its editing domain. The polypeptide is Alanine--tRNA ligase (Prochlorococcus marinus (strain NATL1A)).